The chain runs to 226 residues: Deoxyribose-phosphate aldolase (226 aa).

The active-site Proton donor/acceptor is D94. Residue K156 is the Schiff-base intermediate with acetaldehyde of the active site. K185 serves as the catalytic Proton donor/acceptor.

The protein belongs to the DeoC/FbaB aldolase family. DeoC type 1 subfamily.

Its subcellular location is the cytoplasm. The enzyme catalyses 2-deoxy-D-ribose 5-phosphate = D-glyceraldehyde 3-phosphate + acetaldehyde. Its pathway is carbohydrate degradation; 2-deoxy-D-ribose 1-phosphate degradation; D-glyceraldehyde 3-phosphate and acetaldehyde from 2-deoxy-alpha-D-ribose 1-phosphate: step 2/2. Its function is as follows. Catalyzes a reversible aldol reaction between acetaldehyde and D-glyceraldehyde 3-phosphate to generate 2-deoxy-D-ribose 5-phosphate. This Burkholderia lata (strain ATCC 17760 / DSM 23089 / LMG 22485 / NCIMB 9086 / R18194 / 383) protein is Deoxyribose-phosphate aldolase.